The primary structure comprises 473 residues: UDP-N-acetylmuramoylalanine--D-glutamate ligase (473 aa).

ATP is bound at residue 120–126; the sequence is GSNGKTT.

This sequence belongs to the MurCDEF family.

It localises to the cytoplasm. The enzyme catalyses UDP-N-acetyl-alpha-D-muramoyl-L-alanine + D-glutamate + ATP = UDP-N-acetyl-alpha-D-muramoyl-L-alanyl-D-glutamate + ADP + phosphate + H(+). It functions in the pathway cell wall biogenesis; peptidoglycan biosynthesis. Functionally, cell wall formation. Catalyzes the addition of glutamate to the nucleotide precursor UDP-N-acetylmuramoyl-L-alanine (UMA). In Nitrosospira multiformis (strain ATCC 25196 / NCIMB 11849 / C 71), this protein is UDP-N-acetylmuramoylalanine--D-glutamate ligase.